Here is a 196-residue protein sequence, read N- to C-terminus: Holliday junction branch migration complex subunit RuvA (196 aa).

A domain I region spans residues M1–A63. The tract at residues D64–T136 is domain II. The segment at T136 to E140 is flexible linker. The tract at residues S141–P196 is domain III.

This sequence belongs to the RuvA family. As to quaternary structure, homotetramer. Forms an RuvA(8)-RuvB(12)-Holliday junction (HJ) complex. HJ DNA is sandwiched between 2 RuvA tetramers; dsDNA enters through RuvA and exits via RuvB. An RuvB hexamer assembles on each DNA strand where it exits the tetramer. Each RuvB hexamer is contacted by two RuvA subunits (via domain III) on 2 adjacent RuvB subunits; this complex drives branch migration. In the full resolvosome a probable DNA-RuvA(4)-RuvB(12)-RuvC(2) complex forms which resolves the HJ.

It localises to the cytoplasm. Its function is as follows. The RuvA-RuvB-RuvC complex processes Holliday junction (HJ) DNA during genetic recombination and DNA repair, while the RuvA-RuvB complex plays an important role in the rescue of blocked DNA replication forks via replication fork reversal (RFR). RuvA specifically binds to HJ cruciform DNA, conferring on it an open structure. The RuvB hexamer acts as an ATP-dependent pump, pulling dsDNA into and through the RuvAB complex. HJ branch migration allows RuvC to scan DNA until it finds its consensus sequence, where it cleaves and resolves the cruciform DNA. The polypeptide is Holliday junction branch migration complex subunit RuvA (Acidothermus cellulolyticus (strain ATCC 43068 / DSM 8971 / 11B)).